We begin with the raw amino-acid sequence, 116 residues long: Non-specific lipid-transfer protein 5 (116 aa).

Residues 1-24 (MARSMKLACVVLVMCMIVAPMAEG) form the signal peptide. Cystine bridges form between Cys-28/Cys-75, Cys-38/Cys-52, Cys-53/Cys-98, and Cys-73/Cys-112.

It belongs to the plant LTP family.

Its function is as follows. Plant non-specific lipid-transfer proteins transfer phospholipids as well as galactolipids across membranes. May play a role in wax or cutin deposition in the cell walls of expanding epidermal cells and certain secretory tissues. The protein is Non-specific lipid-transfer protein 5 of Lens culinaris (Lentil).